We begin with the raw amino-acid sequence, 1038 residues long: Pentatricopeptide repeat-containing protein At5g27270 (1038 aa).

The span at 23–38 shows a compositional bias: low complexity; sequence SRNSRISIKSSSSSSK. Residues 23–69 are disordered; sequence SRNSRISIKSSSSSSKVRPDPWSLSDGNPEKPKPRYERPKHPLSDDD. The segment covering 50–69 has biased composition (basic and acidic residues); the sequence is NPEKPKPRYERPKHPLSDDD. 23 PPR repeats span residues 187–221, 222–256, 257–291, 292–326, 327–361, 362–396, 397–431, 432–466, 467–501, 502–535, 536–570, 601–631, 634–668, 669–699, 703–737, 738–772, 773–807, 808–842, 843–877, 878–912, 913–947, 948–982, and 983–1017; these read SVVV…GCEP, DAVA…RILL, STSV…GVPP, NEFT…GFVP, EEVT…GIVP, SNYT…KIPA, DEVI…NLLA, DEKT…DIPL, SRFA…GLPD, ASSC…QVHF, DIEL…ARVK, DVMA…MFKT, GSSA…GLRM, EEET…AGES, GKSV…GCDP, GAVT…NIEL, DTVG…GVPC, SIQT…GLYL, DEKI…GIKP, GTPS…GRCT, DLST…GIPL, SHSH…GISP, and DSAC…SVED.

Belongs to the PPR family. P subfamily.

In Arabidopsis thaliana (Mouse-ear cress), this protein is Pentatricopeptide repeat-containing protein At5g27270 (EMB976).